Reading from the N-terminus, the 88-residue chain is Small ribosomal subunit protein uS19 (88 aa).

The protein belongs to the universal ribosomal protein uS19 family.

Its function is as follows. Protein S19 forms a complex with S13 that binds strongly to the 16S ribosomal RNA. This is Small ribosomal subunit protein uS19 from Chlamydia felis (strain Fe/C-56) (Chlamydophila felis).